A 183-amino-acid polypeptide reads, in one-letter code: 3-hydroxydecanoyl-[acyl-carrier-protein] dehydratase (183 aa).

His77 is an active-site residue.

It belongs to the thioester dehydratase family. FabA subfamily. Homodimer.

The protein resides in the cytoplasm. It carries out the reaction a (3R)-hydroxyacyl-[ACP] = a (2E)-enoyl-[ACP] + H2O. The enzyme catalyses (3R)-hydroxydecanoyl-[ACP] = (2E)-decenoyl-[ACP] + H2O. The catalysed reaction is (2E)-decenoyl-[ACP] = (3Z)-decenoyl-[ACP]. The protein operates within lipid metabolism; fatty acid biosynthesis. Its function is as follows. Necessary for the introduction of cis unsaturation into fatty acids. Catalyzes the dehydration of (3R)-3-hydroxydecanoyl-ACP to E-(2)-decenoyl-ACP and then its isomerization to Z-(3)-decenoyl-ACP. Can catalyze the dehydratase reaction for beta-hydroxyacyl-ACPs with saturated chain lengths up to 16:0, being most active on intermediate chain length. In Hahella chejuensis (strain KCTC 2396), this protein is 3-hydroxydecanoyl-[acyl-carrier-protein] dehydratase.